The primary structure comprises 122 residues: Putative cryptic phosphonate transport system permease protein PhnE2 (122 aa).

The ABC transmembrane type-1 domain occupies 1-114; it reads MLALFIHTTG…VTVSLLDFLS (114 aa). The next 4 membrane-spanning stretches (helical) occupy residues 3–23, 39–59, 68–88, and 93–113; these read ALFI…VEAI, LEEI…SYSL, SATV…WEAI, and FQQT…LDFL.

This sequence belongs to the binding-protein-dependent transport system permease family. As to quaternary structure, if the reading frame is restored, the complex is composed of two ATP-binding proteins (PhnC), two transmembrane proteins (PhnE) and a solute-binding protein (PhnD).

The protein localises to the cell inner membrane. C-terminal fragment of the PhnE protein, part of a phosphonate usage operon that is cryptic in K12 strains. Growth of K12 strains on phosphonate can be observed when it is used as the sole phosphorus source after a 60 hour lag period, suggesting the operon is activated. An intact PhnE in strain B is (AC A0A140NFA3). Part of the binding-protein-dependent transport system for phosphonates; probably responsible for the translocation of the substrate across the membrane. This Escherichia coli (strain K12) protein is Putative cryptic phosphonate transport system permease protein PhnE2 (phnE).